Here is a 71-residue protein sequence, read N- to C-terminus: Beta-defensin 2 (71 aa).

Residues 1 to 20 (MRTLCSLLLICCLLFSYTTP) form the signal peptide. 3 disulfides stabilise this stretch: C37/C66, C44/C59, and C49/C67.

This sequence belongs to the beta-defensin family. Kidney, uterus and to a lesser extent in heart.

Its subcellular location is the secreted. Has bactericidal activity. The protein is Beta-defensin 2 (Defb2) of Mus musculus (Mouse).